The following is a 346-amino-acid chain: Serine/threonine-protein phosphatase PP1(5.9) (346 aa).

Residues Asp-102, His-104, Asp-130, and Asn-162 each contribute to the Mn(2+) site. His-163 functions as the Proton donor in the catalytic mechanism. 2 residues coordinate Mn(2+): His-211 and His-287.

The protein belongs to the PPP phosphatase family. PP-1 subfamily. Mn(2+) is required as a cofactor.

It carries out the reaction O-phospho-L-seryl-[protein] + H2O = L-seryl-[protein] + phosphate. The catalysed reaction is O-phospho-L-threonyl-[protein] + H2O = L-threonyl-[protein] + phosphate. The chain is Serine/threonine-protein phosphatase PP1(5.9) from Trypanosoma brucei brucei.